The primary structure comprises 109 residues: RNA-binding protein Hfq (109 aa).

The Sm domain occupies 9–68; the sequence is DPFLNALRKEKVSVSVYLVNGIKLQGQVEAFDQFCIVLRNTVNQMVYKHAISTIVPAKSV. Residues 77-109 form a disordered region; that stretch reads PYHQNSNDEQDENVDDIHSDDLEIQENEGNIHE.

The protein belongs to the Hfq family. In terms of assembly, homohexamer.

Its function is as follows. RNA chaperone that binds small regulatory RNA (sRNAs) and mRNAs to facilitate mRNA translational regulation in response to envelope stress, environmental stress and changes in metabolite concentrations. Also binds with high specificity to tRNAs. In Francisella tularensis subsp. tularensis (strain FSC 198), this protein is RNA-binding protein Hfq.